The primary structure comprises 574 residues: Bifunctional NADP phosphatase/NAD kinase (574 aa).

Residues 1–297 form an NADP phosphatase region; the sequence is MVIMEGFKIA…KLIALFGNRW (297 aa). The Mg(2+) site is built by Glu69, Asp87, Ile89, Asp90, and Asp243. The NAD kinase stretch occupies residues 302 to 574; the sequence is VKFGIVVRED…NKLSRCLGIK (273 aa). Asp362 serves as the catalytic Proton acceptor. NAD(+) contacts are provided by residues 362-363, Arg367, 436-437, Lys447, Arg464, Asp466, and 477-482; these read DG, NE, and TAYSLS.

This sequence in the N-terminal section; belongs to the inositol monophosphatase superfamily. In the C-terminal section; belongs to the NAD kinase family. Homotetramer. Mg(2+) is required as a cofactor.

It is found in the cytoplasm. The enzyme catalyses NAD(+) + ATP = ADP + NADP(+) + H(+). It carries out the reaction NADP(+) + H2O = phosphate + NAD(+). The catalysed reaction is UTP + NAD(+) = UDP + NADP(+) + H(+). It catalyses the reaction 5-methyl-UTP + NAD(+) = 5-methyl-UDP + NADP(+) + H(+). The enzyme catalyses CTP + NAD(+) = CDP + NADP(+) + H(+). It carries out the reaction GTP + NAD(+) = GDP + NADP(+) + H(+). The catalysed reaction is dATP + NAD(+) = dADP + NADP(+) + H(+). It catalyses the reaction NADPH + H2O = phosphate + NADH. The enzyme catalyses adenosine 2'-phosphate + H2O = adenosine + phosphate. It carries out the reaction beta-D-fructose 1,6-bisphosphate + H2O = beta-D-fructose 6-phosphate + phosphate. Phosphatase activity is slightly inhibited by ADP, NADH and ATP, and moderately inhibited by NAD and 5'-AMP. Kinase activity is slightly inhibited by ADP and NADP. In terms of biological role, involved in the regulation of the intracellular balance between NAD(H) and NADP(H), and is a key enzyme in the biosynthesis of NADP. Catalyzes the phosphorylation and dephosphorylation of NAD and NADP, respectively. Although it shows conflicting dual activities and is able to supply NADP, it seems that its physiological role is to prevent excess accumulation of NADP. Kinase can use ATP and other nucleoside triphosphates (UTP, TTP, CTP, GTP) as well as inorganic polyphosphate (poly(P)) as phosphoryl donors, however poly(P) is not considered to be the physiological phosphoryl donor. NAD is the preferred substrate for the kinase, but NADH can also be used as phosphoryl acceptor. Phosphatase can use NADP or NADPH as phosphoryl donor, but NADP is the preferred substrate. Phosphatase also has an activity toward the terminal phosphate group at C-2 of adenosine in 2'-AMP and toward the phosphate group at C-1 of fructose 1,6-bisphosphate, but not toward inositol 1-phosphate. This is Bifunctional NADP phosphatase/NAD kinase from Methanocaldococcus jannaschii (strain ATCC 43067 / DSM 2661 / JAL-1 / JCM 10045 / NBRC 100440) (Methanococcus jannaschii).